Reading from the N-terminus, the 680-residue chain is DNA-directed RNA polymerase subunit beta' (680 aa).

Positions 69, 71, 87, and 90 each coordinate Zn(2+). Mg(2+) contacts are provided by aspartate 489, aspartate 491, and aspartate 493.

The protein belongs to the RNA polymerase beta' chain family. RpoC1 subfamily. In terms of assembly, in plastids the minimal PEP RNA polymerase catalytic core is composed of four subunits: alpha, beta, beta', and beta''. When a (nuclear-encoded) sigma factor is associated with the core the holoenzyme is formed, which can initiate transcription. Mg(2+) serves as cofactor. The cofactor is Zn(2+).

It localises to the plastid. The protein localises to the chloroplast. The catalysed reaction is RNA(n) + a ribonucleoside 5'-triphosphate = RNA(n+1) + diphosphate. In terms of biological role, DNA-dependent RNA polymerase catalyzes the transcription of DNA into RNA using the four ribonucleoside triphosphates as substrates. This chain is DNA-directed RNA polymerase subunit beta', found in Ranunculus macranthus (Large buttercup).